The following is a 1403-amino-acid chain: MKALLDLFKQVTAEEEFDAITIGLASPDKIRSWSYGEVKKPETINYRTFKPERDGLFCAKIFGPIKDYECLCGKYKRLKHRGVICEKCGVEVTLAKVRRDRMGHIELASPTAHIWFLKSLPSRLGMVLDMTLRDIERVLYFEAYVVTDPGMVSNLQRAQLLTEDQYLEMVEEHGDEFQALMGAEGIRELLRNLELDSEVESLHAELEVTGSEAKNKKLAKRLKILEGFQKSGIKPDWMILEVLPVLPPDLRPLVPLDGGRFATSDLNDLYRRVINRNNRLKRLLELKAPEIIVRNEKRMLQESVDSLLDNGRRGKAMTGANKRPLKSLADMIKGKGGRFRQNLLGKRVDYSGRSVIVVGPQLKLHQCGLPKLMALELFKPFIFHKLEVLGYATTIKQAKKMVEGQEPVVWDILEDVIREHPVMLNRAPTLHRLGIQAFEPTLIEGKAIQLHPLVCAAFNADFDGDQMAVHVPLSLEAQMEARTLMLASNNVLSPANGQPIIVPSQDIVLGLYYATREKINGKGEGMYFADTAEIERAMAAGQLDVHSRISVRLKQYEPAAVDGEWEEKTVRVETTAGRALLAKILPKGLPFKAIDRALKKKEISKLIDESFRRCGLKETVIFADKLMQNGYALATRAGISFCSDDMLVPAKKYEIISSAEAEVKEIETQYTNGLVTQGERYNKVVDIWGRTGDQVAKVMMEELGHEEVIDRHGKKVKQDSFNSIYMMADSGARGSAAQIRQLAGMRGLMAKPDGSIIETPITTNFREGLNVLQYFISTHGARKGLADTALKTANSGYLTRRLVDVTQDLVITEDDCGTKNGFVVKALVEGGEVIEALRERILGRVTVDDLIDPETQETVIFAGTMLDEDLVDLIDKLGIDEVKVRTPLTCDTRYGLCAQCYGRDLGRGTMVNAGEAVGVIAAQSIGEPGTQLTMRTFHVGGAASRAAVADKVEGKSAGTVRYTSNMRYVTSAKGEKVVISRSGEVLIVDDHGRERERHKVPYGAMLSVDEDKSVKAGAKLATWDPHTRPIITEYAGTVRFENVEEGVTVAKQVDDVTGLSTLVVIDHKRGGKAAVKGVRPVVKLLDESGQEVRVHGSDHTVSIAFQVGSIISVVDGQQVGVGDVLARMPQESAKTRDITGGLPRVAELFEARTPKDASVLAEVTGTISFGKDTKGKQRLVITDLEGNVHEFLISKDKHVLVHDGQVVNKGEKIVEGEPDPHDILRLQGIEALARYITDEVQDVYRLQGVKINDKHIEVIVRQMLRRVTIVEPGDTKFIKSEQVERAELLAENDRANAEGKIPATIEHMLLGITKASLSTDSFISAASFQETTRVLTEAAIMGKRDELRGLKENVIVGRLIPAGTGLAFHRSRKAQLAGEDIAASRQIEEATAENTTQEADQGL.

Residues Cys70, Cys72, Cys85, and Cys88 each coordinate Zn(2+). Residues Asp461, Asp463, and Asp465 each contribute to the Mg(2+) site. 4 residues coordinate Zn(2+): Cys816, Cys890, Cys897, and Cys900.

It belongs to the RNA polymerase beta' chain family. The RNAP catalytic core consists of 2 alpha, 1 beta, 1 beta' and 1 omega subunit. When a sigma factor is associated with the core the holoenzyme is formed, which can initiate transcription. The cofactor is Mg(2+). Requires Zn(2+) as cofactor.

The catalysed reaction is RNA(n) + a ribonucleoside 5'-triphosphate = RNA(n+1) + diphosphate. In terms of biological role, DNA-dependent RNA polymerase catalyzes the transcription of DNA into RNA using the four ribonucleoside triphosphates as substrates. The polypeptide is DNA-directed RNA polymerase subunit beta' (Dechloromonas aromatica (strain RCB)).